The primary structure comprises 757 residues: Voltage-gated potassium channel KCNC3 (757 aa).

Residues Met-1 to Gly-78 are important for normal N-type inactivation. The tract at residues Met-1–Ser-87 is disordered. Residues Met-1–Arg-290 lie on the Cytoplasmic side of the membrane. Pro residues predominate over residues Pro-21 to Gln-40. The segment covering Gln-41–Pro-52 has biased composition (low complexity). Zn(2+)-binding residues include His-157, Cys-163, Cys-184, and Cys-185. Positions Ala-210–Ala-219 are enriched in low complexity. Residues Ala-210–Gly-232 are disordered. Residues Tyr-291–Leu-309 form a helical membrane-spanning segment. N-linked (GlcNAc...) asparagine glycans are attached at residues Asn-320 and Asn-336. The chain crosses the membrane as a helical span at residues Val-351–Cys-370. At Pro-371–Ser-379 the chain is on the cytoplasmic side. A helical transmembrane segment spans residues Ser-380–Leu-398. Residues Phe-412–Leu-434 traverse the membrane as a helical; Voltage-sensor segment. Over Arg-435–Glu-447 the chain is Cytoplasmic. Residues Phe-448 to Ala-469 traverse the membrane as a helical segment. N-linked (GlcNAc...) asparagine glycosylation occurs at Asn-483. K(+) contacts are provided by Thr-503, Leu-504, Gly-505, and Tyr-506. The Selectivity filter motif lies at Thr-503 to Asp-508. A helical transmembrane segment spans residues Leu-518 to Val-539. At Asn-540–Pro-757 the chain is on the cytoplasmic side. The disordered stretch occupies residues Pro-556 to Tyr-613. The residue at position 625 (Arg-625) is an Omega-N-methylarginine. The tract at residues Gln-682–Asp-746 is disordered. Ser-686 and Ser-691 each carry phosphoserine. Pro residues predominate over residues Pro-728–Phe-743.

Belongs to the potassium channel family. C (Shaw) (TC 1.A.1.2) subfamily. Kv3.3/KCNC3 sub-subfamily. In terms of assembly, homotetramer. Heterotetramer with KCNC1. Interacts (via C-terminus) with HAX1; this interaction modulates channel gating. Identified in a complex with ACTR3, a subunit of the Arp2/3 complex; this interaction is indirect and depends on the presence of HAX1. In terms of processing, N-glycosylated.

Its subcellular location is the cell membrane. It is found in the presynaptic cell membrane. The protein localises to the perikaryon. It localises to the cell projection. The protein resides in the axon. Its subcellular location is the dendrite. It is found in the dendritic spine membrane. The protein localises to the cytoplasm. It localises to the cell cortex. The protein resides in the cytoskeleton. The catalysed reaction is K(+)(in) = K(+)(out). In terms of biological role, voltage-gated potassium channel that plays an important role in the rapid repolarization of fast-firing brain neurons. The channel opens in response to the voltage difference across the membrane, forming a potassium-selective channel through which potassium ions pass in accordance with their electrochemical gradient. The channel displays rapid activation and inactivation kinetics. It plays a role in the regulation of the frequency, shape and duration of action potentials in Purkinje cells. Required for normal survival of cerebellar neurons, probably via its role in regulating the duration and frequency of action potentials that in turn regulate the activity of voltage-gated Ca(2+) channels and cellular Ca(2+) homeostasis. Required for normal motor function. Plays a role in the reorganization of the cortical actin cytoskeleton and the formation of actin veil structures in neuronal growth cones via its interaction with HAX1 and the Arp2/3 complex. The polypeptide is Voltage-gated potassium channel KCNC3 (KCNC3) (Homo sapiens (Human)).